Consider the following 200-residue polypeptide: Small ribosomal subunit protein uS5 (200 aa).

A compositionally biased stretch (basic and acidic residues) spans Met-1 to Asp-22. A disordered region spans residues Met-1–Ser-26. One can recognise an S5 DRBM domain in the interval Leu-28–Ile-91.

Belongs to the universal ribosomal protein uS5 family. Part of the 30S ribosomal subunit. Contacts proteins S4 and S8.

Functionally, with S4 and S12 plays an important role in translational accuracy. In terms of biological role, located at the back of the 30S subunit body where it stabilizes the conformation of the head with respect to the body. The polypeptide is Small ribosomal subunit protein uS5 (Hyphomonas neptunium (strain ATCC 15444)).